Reading from the N-terminus, the 469-residue chain is E3 ubiquitin-protein ligase TRAIP (469 aa).

The RING-type zinc finger occupies 7–50; it reads CTICSDFFDHSRDVAAIHCGHTFHLQCLIQWFETAPSRTCPQCR. 2 coiled-coil regions span residues 70–177 and 201–280; these read EENV…QSQR and CVSL…TLNL. The tract at residues 211-469 is interaction with CYLD; it reads LKEARKASGE…QAKLDTFLWS (259 aa). K304 is covalently cross-linked (Glycyl lysine isopeptide (Lys-Gly) (interchain with G-Cter in SUMO2)). The PIP-box signature appears at 460 to 469; sequence QAKLDTFLWS.

Belongs to the TRAIP family. As to quaternary structure, interacts (via PIP-box) with PCNA. Binds TRAF1, TRAF2, TRAF3, TRAF5 and TRAF6 is part of the receptor-TRAF signaling complex. May interact with CYLD; the C-terminus interacts with CYLD, however the interaction was not detected with the full-length protein. Interacts with POLK and POLN. Interacts with UIMC1. Sumoylated; sumoylation is required for nuclear localization. Sumoylation increases protein stability, possibly by preventing ubiquitination. In terms of processing, autoubiquitinated.

The protein localises to the nucleus. It localises to the nucleoplasm. The protein resides in the nucleolus. Its subcellular location is the chromosome. It is found in the cytoplasm. The protein localises to the perinuclear region. The enzyme catalyses S-ubiquitinyl-[E2 ubiquitin-conjugating enzyme]-L-cysteine + [acceptor protein]-L-lysine = [E2 ubiquitin-conjugating enzyme]-L-cysteine + N(6)-ubiquitinyl-[acceptor protein]-L-lysine.. It participates in protein modification; protein ubiquitination. Its function is as follows. E3 ubiquitin ligase required to protect genome stability in response to replication stress. Acts as a key regulator of interstrand cross-link repair, which takes place when both strands of duplex DNA are covalently tethered together, thereby blocking replication and transcription. Controls the choice between the two pathways of replication-coupled interstrand-cross-link repair by mediating ubiquitination of MCM7 subunit of the CMG helicase complex. Short ubiquitin chains on MCM7 promote recruitment of DNA glycosylase NEIL3. If the interstrand cross-link cannot be cleaved by NEIL3, the ubiquitin chains continue to grow on MCM7, promoting the unloading of the CMG helicase complex by the VCP/p97 ATPase, enabling the Fanconi anemia DNA repair pathway. Only catalyzes ubiquitination of MCM7 when forks converge. Also involved in the repair of covalent DNA-protein cross-links (DPCs) during DNA synthesis: promotes ubiquitination of DPCs, leading to their degradation by the proteasome. Has also been proposed to play a role in promoting translesion synthesis by mediating the assembly of 'Lys-63'-linked poly-ubiquitin chains on the Y-family polymerase POLN in order to facilitate bypass of DNA lesions and preserve genomic integrity. The function in translesion synthesis is however controversial. Acts as a regulator of the spindle assembly checkpoint. Also acts as a negative regulator of innate immune signaling by inhibiting activation of NF-kappa-B mediated by TNF. Negatively regulates TLR3/4- and RIG-I-mediated IRF3 activation and subsequent IFNB1 production and cellular antiviral response by promoting 'Lys-48'-linked polyubiquitination of TNK1 leading to its proteasomal degradation. This is E3 ubiquitin-protein ligase TRAIP from Homo sapiens (Human).